The chain runs to 297 residues: N-acetylneuraminate lyase (297 aa).

Aceneuramate is bound by residues Ser47 and Thr48. Tyr137 functions as the Proton donor in the catalytic mechanism. Lys165 acts as the Schiff-base intermediate with substrate in catalysis. The aceneuramate site is built by Thr167, Gly189, Asp191, Glu192, and Ser208.

Belongs to the DapA family. NanA subfamily. In terms of assembly, homotetramer.

The protein localises to the cytoplasm. It carries out the reaction aceneuramate = aldehydo-N-acetyl-D-mannosamine + pyruvate. Its pathway is amino-sugar metabolism; N-acetylneuraminate degradation; D-fructose 6-phosphate from N-acetylneuraminate: step 1/5. Its function is as follows. Catalyzes the reversible aldol cleavage of N-acetylneuraminic acid (sialic acid; Neu5Ac) to form pyruvate and N-acetylmannosamine (ManNAc) via a Schiff base intermediate. In Escherichia fergusonii (strain ATCC 35469 / DSM 13698 / CCUG 18766 / IAM 14443 / JCM 21226 / LMG 7866 / NBRC 102419 / NCTC 12128 / CDC 0568-73), this protein is N-acetylneuraminate lyase.